Here is a 160-residue protein sequence, read N- to C-terminus: MSDSERTVDIQVVPPYAAYVDSALIEQAVECTLQMEQVAGPVEVGILITDDAGLQRLNQAYRGVDAPTDVLSFAEADDDSAFVRPPDAPRYLGDIAISWERVVAQAAEYGHSRERELAFLVVHGMLHLLGYDHERSPADEADMRAREEEILRALGLSREE.

Zn(2+) is bound by residues His123, His127, and His133.

This sequence belongs to the endoribonuclease YbeY family. Zn(2+) serves as cofactor.

It localises to the cytoplasm. In terms of biological role, single strand-specific metallo-endoribonuclease involved in late-stage 70S ribosome quality control and in maturation of the 3' terminus of the 16S rRNA. The protein is Endoribonuclease YbeY of Roseiflexus sp. (strain RS-1).